Consider the following 432-residue polypeptide: Adenylosuccinate synthetase (432 aa).

Residues 12-18 (GDEGKGK) and 40-42 (GHT) contribute to the GTP site. The active-site Proton acceptor is the D13. Mg(2+)-binding residues include D13 and G40. IMP contacts are provided by residues 13-16 (DEGK), 38-41 (NAGH), T132, R146, Q226, T241, and R305. H41 (proton donor) is an active-site residue. Residue 301–307 (TVTGRKR) coordinates substrate. GTP-binding positions include R307, 333-335 (KLD), and 415-417 (STS).

Belongs to the adenylosuccinate synthetase family. Homodimer. It depends on Mg(2+) as a cofactor.

It is found in the cytoplasm. It carries out the reaction IMP + L-aspartate + GTP = N(6)-(1,2-dicarboxyethyl)-AMP + GDP + phosphate + 2 H(+). It participates in purine metabolism; AMP biosynthesis via de novo pathway; AMP from IMP: step 1/2. In terms of biological role, plays an important role in the de novo pathway of purine nucleotide biosynthesis. Catalyzes the first committed step in the biosynthesis of AMP from IMP. The polypeptide is Adenylosuccinate synthetase (Allorhizobium ampelinum (strain ATCC BAA-846 / DSM 112012 / S4) (Agrobacterium vitis (strain S4))).